The chain runs to 148 residues: Flavodoxin (148 aa).

The region spanning 4-145 (ALIVYGSTTG…DIVGWAHDVR (142 aa)) is the Flavodoxin-like domain.

It belongs to the flavodoxin family. The cofactor is FMN.

In terms of biological role, low-potential electron donor to a number of redox enzymes. This Nitratidesulfovibrio vulgaris (strain ATCC 29579 / DSM 644 / CCUG 34227 / NCIMB 8303 / VKM B-1760 / Hildenborough) (Desulfovibrio vulgaris) protein is Flavodoxin.